Consider the following 59-residue polypeptide: Large ribosomal subunit protein uL30 (59 aa).

It belongs to the universal ribosomal protein uL30 family. As to quaternary structure, part of the 50S ribosomal subunit.

This Listeria welshimeri serovar 6b (strain ATCC 35897 / DSM 20650 / CCUG 15529 / CIP 8149 / NCTC 11857 / SLCC 5334 / V8) protein is Large ribosomal subunit protein uL30.